We begin with the raw amino-acid sequence, 155 residues long: Ribosome maturation factor RimP (155 aa).

This sequence belongs to the RimP family.

The protein resides in the cytoplasm. Functionally, required for maturation of 30S ribosomal subunits. The polypeptide is Ribosome maturation factor RimP (Lachnoclostridium phytofermentans (strain ATCC 700394 / DSM 18823 / ISDg) (Clostridium phytofermentans)).